Consider the following 200-residue polypeptide: Translation machinery-associated protein 22 (200 aa).

The region spanning 106–177 (VQIKRVERNK…DVLEWLVEVH (72 aa)) is the SUI1 domain.

The protein belongs to the DENR family. As to quaternary structure, interacts with the 40S ribosomal subunit.

Its subcellular location is the cytoplasm. The chain is Translation machinery-associated protein 22 (TMA22) from Coccidioides immitis (strain RS) (Valley fever fungus).